Reading from the N-terminus, the 364-residue chain is Growth hormone secretagogue receptor type 1 (364 aa).

The Extracellular portion of the chain corresponds to Met-1–Pro-40. 2 N-linked (GlcNAc...) asparagine glycosylation sites follow: Asn-13 and Asn-26. A helical transmembrane segment spans residues Leu-41–Val-66. At Val-67 to Glu-72 the chain is on the cytoplasmic side. A helical transmembrane segment spans residues Leu-73 to Pro-96. The Extracellular segment spans residues Leu-97–Leu-117. Residues Cys-115 and Cys-197 are joined by a disulfide bond. A helical membrane pass occupies residues Phe-118 to Glu-139. Over Arg-140–Val-162 the chain is Cytoplasmic. Residues Ile-163–Val-183 form a helical membrane-spanning segment. The Extracellular portion of the chain corresponds to Glu-184 to Val-211. The N-linked (GlcNAc...) asparagine glycan is linked to Asn-187. Residues Met-212 to Gly-235 traverse the membrane as a helical segment. Topologically, residues Arg-236–Leu-263 are cytoplasmic. A helical membrane pass occupies residues Ala-264–Ser-285. Over Lys-286–Cys-302 the chain is Extracellular. A helical transmembrane segment spans residues Asn-303 to Lys-326. Topologically, residues Lys-327 to Thr-364 are cytoplasmic.

The protein belongs to the G-protein coupled receptor 1 family.

The protein localises to the cell membrane. Receptor for ghrelin, coupled to G-alpha-11 proteins. Stimulates growth hormone secretion. Also binds other growth hormone releasing peptides (GHRP) (e.g. Met-enkephalin and GHRP-6) as well as non-peptide, low molecular weight secretagogues (e.g. L-692,429, MK-0677, adenosine). The sequence is that of Growth hormone secretagogue receptor type 1 (Ghsr) from Mus musculus (Mouse).